Here is a 423-residue protein sequence, read N- to C-terminus: Serine--tRNA ligase (423 aa).

229–231 (TAE) provides a ligand contact to L-serine. Residue 258 to 260 (RRE) coordinates ATP. L-serine is bound at residue glutamate 281. ATP is bound at residue 345-348 (EISS). Serine 379 is an L-serine binding site.

Belongs to the class-II aminoacyl-tRNA synthetase family. Type-1 seryl-tRNA synthetase subfamily. As to quaternary structure, homodimer. The tRNA molecule binds across the dimer.

The protein resides in the cytoplasm. The enzyme catalyses tRNA(Ser) + L-serine + ATP = L-seryl-tRNA(Ser) + AMP + diphosphate + H(+). The catalysed reaction is tRNA(Sec) + L-serine + ATP = L-seryl-tRNA(Sec) + AMP + diphosphate + H(+). Its pathway is aminoacyl-tRNA biosynthesis; selenocysteinyl-tRNA(Sec) biosynthesis; L-seryl-tRNA(Sec) from L-serine and tRNA(Sec): step 1/1. Catalyzes the attachment of serine to tRNA(Ser). Is also able to aminoacylate tRNA(Sec) with serine, to form the misacylated tRNA L-seryl-tRNA(Sec), which will be further converted into selenocysteinyl-tRNA(Sec). The sequence is that of Serine--tRNA ligase (serS1) from Methanosarcina barkeri (strain Fusaro / DSM 804).